The chain runs to 953 residues: Zinc finger protein 507 (953 aa).

Ser95 carries the phosphoserine modification. 3 C2H2-type zinc fingers span residues 125-147, 155-185, and 248-270; these read YQCS…IKQH, LMCS…ANIH, and YRCL…AWKH. Ser427 is modified (phosphoserine). The segment at 470-489 is disordered; that stretch reads KGLATDENAPPGRRRTNSES. C2H2-type zinc fingers lie at residues 641 to 663, 669 to 691, 697 to 720, 758 to 780, and 786 to 808; these read YRCR…LRVH, YQCP…MIHH, YQCK…REQH, YRCD…RRIH, and YRCS…MWKH. Residues 831–888 are disordered; that stretch reads GRVLGKSPGKTQLKSSEESADPVTGSSENAVSSSELMSQTPSEVLGTNENEKLSPTSN. Positions 854 to 888 are enriched in polar residues; that stretch reads TGSSENAVSSSELMSQTPSEVLGTNENEKLSPTSN. Residues 911–933 form a C2H2-type 9 zinc finger; the sequence is FCCCICGFESTSKENLLDHMKEH.

It belongs to the krueppel C2H2-type zinc-finger protein family.

It localises to the nucleus. Functionally, may be involved in transcriptional regulation. This is Zinc finger protein 507 (ZNF507) from Homo sapiens (Human).